Here is a 77-residue protein sequence, read N- to C-terminus: Rhodotorucin-A peptides type 2 (77 aa).

Positions 1–3 are excised as a propeptide; sequence MVA. The S-farnesyl cysteine moiety is linked to residue cysteine 14. Residues 15–18 constitute a propeptide that is removed on maturation; it reads TVAK. The S-farnesyl cysteine moiety is linked to residue cysteine 29. Residues 30–33 constitute a propeptide that is removed on maturation; sequence TVSK. Cysteine 44 is lipidated: S-farnesyl cysteine. Positions 45–48 are excised as a propeptide; the sequence is TVSK. The S-farnesyl cysteine moiety is linked to residue cysteine 59. Residues 60-63 constitute a propeptide that is removed on maturation; it reads TVSK. Cysteine 74 is lipidated: S-farnesyl cysteine. Positions 75–77 are excised as a propeptide; that stretch reads TVA.

The protein localises to the cell membrane. Its function is as follows. Rhodotorucin-A is a mating pheromone in cells of mating type A of Rhodosporidium toruloides. In Rhodotorula toruloides (Yeast), this protein is Rhodotorucin-A peptides type 2 (RHA2).